We begin with the raw amino-acid sequence, 1577 residues long: Dynamin-binding protein (1577 aa).

M1 carries the post-translational modification N-acetylmethionine. 4 SH3 domains span residues 2–61, 66–126, 145–204, and 243–302; these read EAGS…IVTI, EGER…ELCL, YSMG…LLGP, and EPGT…LCPD. Disordered stretches follow at residues 211–244 and 335–395; these read SVSS…EEEP and EEQR…WEMP. The span at 230 to 244 shows a compositional bias: acidic residues; that stretch reads VGEEEIGPDEDEEEP. The span at 335-344 shows a compositional bias: basic and acidic residues; it reads EEQRHETSDH. Residue S496 is modified to Phosphoserine. 2 disordered regions span residues 591 to 624 and 639 to 659; these read GSSK…TSPH and VRPS…NAVS. Over residues 639–649 the composition is skewed to pro residues; the sequence is VRPSRPAPLPP. At S684 the chain carries Phosphoserine. Positions 693–757 form a coiled coil; the sequence is LVLVRIEEME…ELQQLREMTL (65 aa). The DH domain occupies 784–967; it reads KRAKVIEELL…KEINVNINEY (184 aa). Positions 1008-1217 constitute a BAR domain; it reads LKHLTGFAPQ…LKVAGREGNL (210 aa). Residues 1136–1173 are a coiled coil; it reads ERAEKLKDKKTLEELQSARNNYEALNAQLLDELPKFHQ. The SH3 5 domain occupies 1285–1348; the sequence is PPEKLFQAER…YSSFLKPYNP (64 aa). The segment at 1348–1487 is disordered; that stretch reads PRRSHSDASV…SVPGRNGQSQ (140 aa). Residues 1376–1405 are compositionally biased toward polar residues; sequence RQNSGSTLTFNPSSMAVSFTSGSCQKQPQD. Residues 1419 to 1442 are compositionally biased toward low complexity; it reads SASLNPSNSESSPSRCPSDPDSTS. Residues 1513 to 1576 enclose the SH3 6 domain; the sequence is EGNQVYFAVY…PSNYIRKTEY (64 aa).

Binds DNM1 via its N-terminal SH3 domains. The C-terminal SH3 domain binds a complex containing actin, tubulin, Hsp70 and actin-regulatory proteins, such as ENAH, EVL, WIRE, CR16, WAVE1 and NAP1L1. Interacts with FASLG. Interacts (via SH3 domain 6) with WASL. Interacts (via SH3 domain 6) interacts with ENAH. Interacts (via C-terminal domain) with TJP1; required for the apical cell-cell junction localization of DNMBP. In terms of assembly, (Microbial infection) Interacts (via SH3 domain 6) with L.monocytogenes InlC. As to expression, detected in heart, brain, lung, liver, skeletal muscle, kidney and pancreas.

The protein localises to the cytoplasm. It is found in the golgi apparatus. It localises to the golgi stack. The protein resides in the cytoskeleton. Its subcellular location is the synapse. The protein localises to the cell junction. Its function is as follows. Plays a critical role as a guanine nucleotide exchange factor (GEF) for CDC42 in several intracellular processes associated with the actin and microtubule cytoskeleton. Regulates the structure of apical junctions through F-actin organization in epithelial cells. Participates in the normal lumenogenesis of epithelial cell cysts by regulating spindle orientation. Plays a role in ciliogenesis. May play a role in membrane trafficking between the cell surface and the Golgi. The chain is Dynamin-binding protein from Homo sapiens (Human).